A 486-amino-acid polypeptide reads, in one-letter code: Vacuolar protein sorting-associated protein 73 (486 aa).

The Cytoplasmic portion of the chain corresponds to 1–26 (MNRILSSASLLSNVSMPRQNKHKITK). A helical membrane pass occupies residues 27–47 (ALCYAIIVASIGSIQFGYHLS). Residues 48–90 (ELNAPQQVLSCSEFDIPMEGYPYDRTWLGKRGYKQCIPLNDEQ) lie on the Mitochondrial intermembrane side of the membrane. The helical transmembrane segment at 91-111 (IGIVTSVFCIGGILGSYFATS) threads the bilayer. The Cytoplasmic portion of the chain corresponds to 112–119 (LANIYGRK). A helical membrane pass occupies residues 120–140 (FSSLINCTLNIVGSLIIFNSN). The Mitochondrial intermembrane portion of the chain corresponds to 141-146 (SYRGLI). The helical transmembrane segment at 147-167 (IGRILVGISCGSLIVIIPLFI) threads the bilayer. Over 168–178 (KEVAPSGWEGL) the chain is Cytoplasmic. The helical transmembrane segment at 179–199 (LGSMTQICIRLGVLLTQGIAL) threads the bilayer. At 200–208 (PLTDSYRWR) the chain is on the mitochondrial intermembrane side. A helical transmembrane segment spans residues 209 to 229 (WILFGSFLIAVLNFFMWFIVD). Residues 230-305 (ESPKWLLAHG…RDRTNVKSRH (76 aa)) are Cytoplasmic-facing. The chain crosses the membrane as a helical span at residues 306 to 326 (VITVLLFGQQFCGINSIVLYG). The Mitochondrial intermembrane segment spans residues 327–342 (TKIISQLYPQHAIRIN). The helical transmembrane segment at 343–363 (FFISMVNVLVTILVSLLIHSL) threads the bilayer. Residues 364-366 (PRK) lie on the Cytoplasmic side of the membrane. The chain crosses the membrane as a helical span at residues 367–387 (PLLMTSTVLVSVTAFIMGIAM). Topologically, residues 388-396 (NHNKMNLLI) are mitochondrial intermembrane. The helical transmembrane segment at 397–417 (VFSFIYMGVFTMGLNPLPFII) threads the bilayer. The Cytoplasmic portion of the chain corresponds to 418-432 (MREVSKPQDMVLAQR). Residues 433–453 (YGTICNWVGTFIIAYTFPIIH) traverse the membrane as a helical segment. Asp454 is a topological domain (mitochondrial intermembrane). A helical transmembrane segment spans residues 455 to 475 (VLSGYVFIIFAIIACSISAFI). The Cytoplasmic segment spans residues 476-486 (WKKVPETKRSG).

This sequence belongs to the major facilitator superfamily. Sugar transporter (TC 2.A.1.1) family.

Its subcellular location is the mitochondrion membrane. May be involved in vacuolar protein sorting. The protein is Vacuolar protein sorting-associated protein 73 (VPS73) of Saccharomyces cerevisiae (strain ATCC 204508 / S288c) (Baker's yeast).